Consider the following 379-residue polypeptide: MDETYEENEKVLVHHQNRIYEAKIIKVDPKTSKSDKKKPLYFIHYLGWKEKWNEWIEPNKILKYTDKNRELQKRTNIKASTTSLNNKKNTKKAKEVKQQQQQQQPIAYDSENSDEDENESELEDGGGEDADEGGEDIEDQENNNNNDTGGEEADDNNTSPRSTGSSSSSSSSKSNNNNNNNNNNNNNNNNNNNNNNNNNNKRKRNDSKSSHFQSTKFIDIEIPLSLKNKLVDDWNSINNEKSILSLPKSPNVKDILNKIIEENDKSSECKEVINGIKQYFNKALGTLLLYKFERPQYDSILKTNPKKSMSDIYGAEHLLRLFVKLPQLLVISNLEEKTITQLKDAFEIVLEYLEKNSSTLFLKEYTIASSPYLKAASSN.

Residues 6-61 (EENEKVLVHHQNRIYEAKIIKVDPKTSKSDKKKPLYFIHYLGWKEKWNEWIEPNKI) enclose the Tudor-knot domain. The interval 75–212 (TNIKASTTSL…KRNDSKSSHF (138 aa)) is disordered. Positions 78-87 (KASTTSLNNK) are enriched in low complexity. The segment covering 111–141 (ENSDEDENESELEDGGGEDADEGGEDIEDQE) has biased composition (acidic residues). The span at 165 to 199 (SSSSSSSSKSNNNNNNNNNNNNNNNNNNNNNNNNN) shows a compositional bias: low complexity. The MRG domain maps to 214 to 377 (STKFIDIEIP…ASSPYLKAAS (164 aa)).

Component of the NuA4 histone acetyltransferase complex.

It localises to the nucleus. Its function is as follows. Component of the NuA4 histone acetyltransferase complex which is involved in transcriptional activation of selected genes principally by acetylation of nucleosomal histone H4 and H2A. The NuA4 complex is also involved in DNA repair. Also a component of a complex which acts to repress transcription by deacetylation of nucleosomal histones. This Dictyostelium discoideum (Social amoeba) protein is NuA4 complex subunit EAF3 homolog.